An 805-amino-acid chain; its full sequence is Transitional endoplasmic reticulum ATPase (805 aa).

S3 is modified (phosphoserine). Residues 247 to 253 (PGTGKTL), N348, H384, and 521 to 526 (GCGKTL) contribute to the ATP site. A disordered region spans residues 768–805 (FGSFRFPAGGQGGAGPSQGAGGGSGGSHFNEEEDDLYG). Residues 776–793 (GGQGGAGPSQGAGGGSGG) show a composition bias toward gly residues.

This sequence belongs to the AAA ATPase family. Homohexamer. Forms a ring-shaped particle of 12.5 nm diameter, that displays 6-fold radial symmetry. Interacts with the FACT/DUF complex, which includes subunits ssrp1/duf87 and supt16h/duf140. Post-translationally, phosphorylated.

The protein localises to the cytoplasm. Its subcellular location is the cytosol. The protein resides in the endoplasmic reticulum. It is found in the nucleus. It localises to the stress granule. It carries out the reaction ATP + H2O = ADP + phosphate + H(+). With respect to regulation, ATPase activity is inhibited or reduced by lowering pH from 9.0 to 7.0, and by addition of Ca(2+), EDTA, KNO(3) or by treatment with N-ethylmaleimide (NEM). Its function is as follows. Necessary for the fragmentation of Golgi stacks during mitosis and for their reassembly after mitosis. Involved in the formation of the nuclear envelope, and of the transitional endoplasmic reticulum (tER). The transfer of membranes from the endoplasmic reticulum to the Golgi apparatus occurs via 50-70 nm transition vesicles which derive from part-rough, part-smooth transitional elements of the endoplasmic reticulum (tER). Vesicle budding from the tER is an ATP-dependent process. Involved in endoplasmic reticulum stress-induced pre-emptive quality control, a mechanism that selectively attenuates the translocation of newly synthesized proteins into the endoplasmic reticulum and reroutes them to the cytosol for proteasomal degradation. Involved in clearance process by mediating G3BP1 extraction from stress granules. Also involved in DNA damage response: recruited to double-strand breaks (DSBs) sites and promotes the recruitment of tp53bp1 at DNA damage sites. Together with sprtn metalloprotease, involved in the repair of covalent DNA-protein cross-links (DPCs) during DNA synthesis. Involved in interstrand cross-link repair in response to replication stress by mediating unloading of the ubiquitinated CMG helicase complex. Enhances cell cycle progression and inhibits apoptosis at low temperatures. Essential for the maturation of ubiquitin-containing autophagosomes and the clearance of ubiquitinated protein by autophagy. Acts as a negative regulator of type I interferon production by promoting ubiquitination of rigi. May play a role in the ubiquitin-dependent sorting of membrane proteins to lysosomes where they undergo degradation. May more particularly play a role in caveolins sorting in cells. By controlling the steady-state expression of the IGF1R receptor, indirectly regulates the insulin-like growth factor receptor signaling pathway. The sequence is that of Transitional endoplasmic reticulum ATPase from Xenopus tropicalis (Western clawed frog).